Here is a 271-residue protein sequence, read N- to C-terminus: Ribosomal RNA small subunit methyltransferase I (271 aa).

Belongs to the methyltransferase superfamily. RsmI family.

It is found in the cytoplasm. It catalyses the reaction cytidine(1402) in 16S rRNA + S-adenosyl-L-methionine = 2'-O-methylcytidine(1402) in 16S rRNA + S-adenosyl-L-homocysteine + H(+). Functionally, catalyzes the 2'-O-methylation of the ribose of cytidine 1402 (C1402) in 16S rRNA. The chain is Ribosomal RNA small subunit methyltransferase I from Campylobacter fetus subsp. fetus (strain 82-40).